The primary structure comprises 67 residues: Teratocyte protein CftICK-II (67 aa).

Residues 1 to 25 form the signal peptide; sequence MVKSLLFAIGYLIFLLVTRVNVINA. Disulfide bonds link Cys28–Cys42, Cys35–Cys46, and Cys41–Cys57.

As to expression, abundantly expressed by teratocytes, which are extra-embryonic cells released by parasitoid wasps into their hosts during larval eclosion.

The protein resides in the secreted. Its function is as follows. This endoparasitoid wasp peptide has immununosuppressive, antimicrobial and insecticidal activities. Suppress cellular immunity which is detectable as a reduction of hemocyte encapsulation in the host. Shows moderate antifungal activity against C.albicans (MIC=4 ug/ml). In vivo, ingestion of this peptide (probably at excessive doses) increases larval mortality and reduces leaf consumption of D.saccharalis, a permissive host for C.flavipes. In Cotesia flavipes (Parasitic wasp), this protein is Teratocyte protein CftICK-II.